Consider the following 30-residue polypeptide: Snaclec carinactivase-1 regulatory subunit 14 kDa chain (30 aa).

The C-type lectin domain occupies 1–30; the sequence is DCLPDWFHYEGHCYRVFDEPKKWADAEKFC. Cysteine 2 and cysteine 13 are oxidised to a cystine.

The protein belongs to the snaclec family. Heterodimer of a metalloproteinase subunit and a regulatory subunit comprising two polypeptides disulfide-linked (14 kDa and 17 kDa chains). In terms of tissue distribution, expressed by the venom gland.

It is found in the secreted. In terms of biological role, calcium-dependent prothrombin activator. This protein may activate prothrombin via recognition by the regulatory subunit of the calcium ion bound conformation of its gamma-carboxyglutamic acid (GLA) domain, and the subsequent conversion of prothrombin to active thrombin is catalyzed by the catalytic subunit. This is Snaclec carinactivase-1 regulatory subunit 14 kDa chain from Echis carinatus (Saw-scaled viper).